The primary structure comprises 531 residues: Phosphomethylpyrimidine synthase (531 aa).

Substrate is bound by residues Asn-167, Met-196, Tyr-225, His-261, 281–283 (SRG), 322–325 (DALR), and Glu-361. His-365 contributes to the Zn(2+) binding site. Residue Tyr-388 participates in substrate binding. Residue His-429 coordinates Zn(2+). Cys-511, Cys-514, and Cys-519 together coordinate [4Fe-4S] cluster.

Belongs to the ThiC family. It depends on [4Fe-4S] cluster as a cofactor.

The catalysed reaction is 5-amino-1-(5-phospho-beta-D-ribosyl)imidazole + S-adenosyl-L-methionine = 4-amino-2-methyl-5-(phosphooxymethyl)pyrimidine + CO + 5'-deoxyadenosine + formate + L-methionine + 3 H(+). It functions in the pathway cofactor biosynthesis; thiamine diphosphate biosynthesis. Functionally, catalyzes the synthesis of the hydroxymethylpyrimidine phosphate (HMP-P) moiety of thiamine from aminoimidazole ribotide (AIR) in a radical S-adenosyl-L-methionine (SAM)-dependent reaction. The polypeptide is Phosphomethylpyrimidine synthase (Chlorobium chlorochromatii (strain CaD3)).